Consider the following 197-residue polypeptide: Recombination protein RecR (197 aa).

Residues 57–72 (CSVCFGITEDDPCHLC) form a C4-type zinc finger. The region spanning 79–174 (TTICVVEEPQ…RVTRLAHGIP (96 aa)) is the Toprim domain.

It belongs to the RecR family.

Functionally, may play a role in DNA repair. It seems to be involved in an RecBC-independent recombinational process of DNA repair. It may act with RecF and RecO. In Geotalea daltonii (strain DSM 22248 / JCM 15807 / FRC-32) (Geobacter daltonii), this protein is Recombination protein RecR.